The primary structure comprises 555 residues: Synaptotagmin-14 (555 aa).

Over methionine 1–glutamate 24 the chain is Extracellular. The helical; Signal-anchor for type III membrane protein transmembrane segment at alanine 25–asparagine 47 threads the bilayer. The Cytoplasmic portion of the chain corresponds to lysine 48–serine 555. Disordered regions lie at residues threonine 157–cysteine 179 and glycine 222–proline 257. 2 C2 domains span residues lysine 260 to valine 379 and serine 415 to histidine 550.

Belongs to the synaptotagmin family. In terms of assembly, homodimer. Can also form heterodimers. Highly expressed in fetal and adult brain tissue.

Its subcellular location is the membrane. May be involved in the trafficking and exocytosis of secretory vesicles in non-neuronal tissues. Is Ca(2+)-independent. In Homo sapiens (Human), this protein is Synaptotagmin-14 (SYT14).